The chain runs to 202 residues: Protein G1-like4 (202 aa).

Disordered regions lie at residues 1–44 and 158–202; these read MDLS…RYEA and RARG…GAAC. The segment covering 12–22 has biased composition (gly residues); sequence SGGGNGGGGGS. The span at 23–36 shows a compositional bias: low complexity; the sequence is SSSNSSPSMGAGAP. Residues 41-168 enclose the ALOG domain; sequence RYEAQKRRDW…ARGVSYEKKK (128 aa). The Nuclear localization signal signature appears at 166–170; the sequence is KKKRK. The segment covering 173–186 has biased composition (low complexity); that stretch reads QQQQLQGGDSSGLH. The span at 192–202 shows a compositional bias: pro residues; sequence PPPPPPAGAAC.

Belongs to the plant homeotic and developmental regulators ALOG protein family.

It localises to the nucleus. Its function is as follows. Probable transcription regulator that acts as a developmental regulator by promoting cell growth in response to light. This is Protein G1-like4 from Oryza sativa subsp. indica (Rice).